A 550-amino-acid polypeptide reads, in one-letter code: Membrane protein insertase YidC (550 aa).

Residues 6 to 26 (NLLVIALLFVSFMIWQTWEQD) traverse the membrane as a helical segment. Disordered regions lie at residues 28–54 (APKPQVQQTTQTTTTAAGSAASQGVPA) and 111–132 (QSGLTGRNGPDNPNNNKGRPLY). Low complexity predominate over residues 30-52 (KPQVQQTTQTTTTAAGSAASQGV). The segment covering 111 to 127 (QSGLTGRNGPDNPNNNK) has biased composition (polar residues). The next 4 membrane-spanning stretches (helical) occupy residues 346 to 366 (KWIHSFLGNWGFSIIAITFIV), 421 to 441 (LGGCFPLLIQMPIFLALYYML), 459 to 479 (LSAQDPYYILPILMGATMFFI), and 500 to 520 (PVIFTVFFLWFPSGLVLYYIV).

Belongs to the OXA1/ALB3/YidC family. Type 1 subfamily. As to quaternary structure, interacts with the Sec translocase complex via SecD. Specifically interacts with transmembrane segments of nascent integral membrane proteins during membrane integration.

The protein resides in the cell inner membrane. Required for the insertion and/or proper folding and/or complex formation of integral membrane proteins into the membrane. Involved in integration of membrane proteins that insert both dependently and independently of the Sec translocase complex, as well as at least some lipoproteins. Aids folding of multispanning membrane proteins. This is Membrane protein insertase YidC from Cronobacter sakazakii (strain ATCC BAA-894) (Enterobacter sakazakii).